Consider the following 166-residue polypeptide: Mitochondrial fission process protein 1 (166 aa).

Transmembrane regions (helical) follow at residues 34 to 54 and 78 to 98; these read SLVP…YVLA and ALAV…IPGF. Lys123 carries the post-translational modification N6-succinyllysine. The helical transmembrane segment at 129–149 threads the bilayer; that stretch reads LGLLAIPVIIHPIDRSVDFLL.

The protein belongs to the MTFP1 family.

The protein localises to the mitochondrion inner membrane. Functionally, involved in the mitochondrial division probably by regulating membrane fission. Loss-of-function leads to apoptosis. The chain is Mitochondrial fission process protein 1 (Mtfp1) from Mus musculus (Mouse).